Reading from the N-terminus, the 142-residue chain is Virulence-associated membrane protein 1 (142 aa).

Residues 1–20 form the signal peptide; it reads MRGILVALTAALIFCSLTPA. The chain crosses the membrane as a helical span at residues 59–79; the sequence is IAIAVGTALVTLVSAGVGGML.

In terms of assembly, monomer.

It is found in the membrane. Its function is as follows. During infection, may play a role in establishing and maintaining biotrophy; the formation of a tight interaction zone between the host and the pathogen. The polypeptide is Virulence-associated membrane protein 1 (Mycosarcoma maydis (Corn smut fungus)).